The chain runs to 977 residues: Alanine--tRNA ligase (977 aa).

The interval 512–535 is disordered; that stretch reads SQVDSKLQSSTPAGTGSYDSKQVS. Zn(2+) is bound by residues H618, H622, C720, and H724.

Belongs to the class-II aminoacyl-tRNA synthetase family. It depends on Zn(2+) as a cofactor.

It localises to the cytoplasm. The catalysed reaction is tRNA(Ala) + L-alanine + ATP = L-alanyl-tRNA(Ala) + AMP + diphosphate. In terms of biological role, catalyzes the attachment of alanine to tRNA(Ala) in a two-step reaction: alanine is first activated by ATP to form Ala-AMP and then transferred to the acceptor end of tRNA(Ala). Also edits incorrectly charged Ser-tRNA(Ala) and Gly-tRNA(Ala) via its editing domain. This is Alanine--tRNA ligase from Leptospira interrogans serogroup Icterohaemorrhagiae serovar Lai (strain 56601).